Here is a 288-residue protein sequence, read N- to C-terminus: Cell division protein ZipA (288 aa).

A topological domain (periplasmic) is located at residue methionine 1. Residues 2–22 (EIGLREWLIVIGIIVIAGILF) traverse the membrane as a helical segment. Topologically, residues 23-288 (DGWRRMRGGK…ERRALTQRRG (266 aa)) are cytoplasmic. The tract at residues 48 to 138 (DEEETTSAEV…DDKPAQRITE (91 aa)) is disordered. Basic and acidic residues-rich tracts occupy residues 64–77 (LDTH…EHDL), 85–105 (RDNK…KDEP), and 122–138 (ARDD…RITE).

Belongs to the ZipA family. Interacts with FtsZ via their C-terminal domains.

The protein resides in the cell inner membrane. Essential cell division protein that stabilizes the FtsZ protofilaments by cross-linking them and that serves as a cytoplasmic membrane anchor for the Z ring. Also required for the recruitment to the septal ring of downstream cell division proteins. The chain is Cell division protein ZipA from Pseudomonas syringae pv. tomato (strain ATCC BAA-871 / DC3000).